We begin with the raw amino-acid sequence, 448 residues long: Adenylosuccinate synthetase (448 aa).

Residues 22–28 (GDEGKGK) and 50–52 (GHT) contribute to the GTP site. Residue Asp-23 is the Proton acceptor of the active site. Asp-23 and Gly-50 together coordinate Mg(2+). IMP is bound by residues 23 to 26 (DEGK), 48 to 51 (NAGH), Thr-139, Arg-153, Gln-234, Thr-249, and Arg-321. His-51 acts as the Proton donor in catalysis. 317–323 (SVTGRPR) contributes to the substrate binding site. GTP-binding positions include Arg-323, 349–351 (KLD), and 431–433 (STG).

The protein belongs to the adenylosuccinate synthetase family. As to quaternary structure, homodimer. It depends on Mg(2+) as a cofactor.

It localises to the cytoplasm. It carries out the reaction IMP + L-aspartate + GTP = N(6)-(1,2-dicarboxyethyl)-AMP + GDP + phosphate + 2 H(+). It participates in purine metabolism; AMP biosynthesis via de novo pathway; AMP from IMP: step 1/2. Its function is as follows. Plays an important role in the de novo pathway of purine nucleotide biosynthesis. Catalyzes the first committed step in the biosynthesis of AMP from IMP. The sequence is that of Adenylosuccinate synthetase from Paraburkholderia xenovorans (strain LB400).